The following is a 201-amino-acid chain: MSRYRGPCFKKIRRLGYLPGLTSKKPTVKNELRNQLRFSKKSQYRIRLEEKQKLRFHYGLTERQLLKYVRISGKAKGSTGQVLLQLLEMRLDNILFRLGMAATIPQARQFINHRHVLVNGRIVDIPSYRCKPQDIITAKDEQKSKTLIQNYLDSAPRDKLPNHLTVHPFQYKGLINQIIDNKWVGLKINELLVVEYYSRQT.

An S4 RNA-binding domain is found at 89–151 (MRLDNILFRL…QKSKTLIQNY (63 aa)).

It belongs to the universal ribosomal protein uS4 family. As to quaternary structure, part of the 30S ribosomal subunit. Contacts protein S5. The interaction surface between S4 and S5 is involved in control of translational fidelity.

It is found in the plastid. The protein resides in the chloroplast. One of the primary rRNA binding proteins, it binds directly to 16S rRNA where it nucleates assembly of the body of the 30S subunit. Its function is as follows. With S5 and S12 plays an important role in translational accuracy. The sequence is that of Small ribosomal subunit protein uS4c (rps4) from Phaseolus vulgaris (Kidney bean).